Consider the following 485-residue polypeptide: Peptidyl-prolyl cis-trans isomerase-like 4 (485 aa).

In terms of domain architecture, PPIase cyclophilin-type spans methionine 1–isoleucine 172. Positions asparagine 251 to serine 329 constitute an RRM domain. The tract at residues asparagine 377–arginine 485 is disordered. Positions arginine 426–arginine 485 are enriched in basic and acidic residues.

The protein belongs to the cyclophilin-type PPIase family. PPIL4 subfamily.

The protein resides in the nucleus. The enzyme catalyses [protein]-peptidylproline (omega=180) = [protein]-peptidylproline (omega=0). Its function is as follows. PPIases accelerate the folding of proteins. It catalyzes the cis-trans isomerization of proline imidic peptide bonds in oligopeptides. This chain is Peptidyl-prolyl cis-trans isomerase-like 4 (CYP6), found in Gibberella zeae (strain ATCC MYA-4620 / CBS 123657 / FGSC 9075 / NRRL 31084 / PH-1) (Wheat head blight fungus).